The primary structure comprises 617 residues: Serine/threonine-protein kinase par-4 (617 aa).

Positions 1–11 are enriched in polar residues; that stretch reads MDAPSTSSGAQ. The interval 1–59 is disordered; sequence MDAPSTSSGAQSKLLMPGDDEADEDHQNRGDPNLQQKQKIQLNVDPDYDDDEDDDCFID. Residues 46–57 are compositionally biased toward acidic residues; it reads PDYDDDEDDDCF. The 264-residue stretch at 183 to 446 folds into the Protein kinase domain; it reads YMWGGQIGTG…CLETMIHPWF (264 aa). ATP is bound by residues 189–197 and K212; that span reads IGTGSYGKV. The Proton acceptor role is filled by D310. The interval 523–617 is disordered; it reads LEAKPGDGPD…CIFRSRTDSA (95 aa). Residues 587-597 show a composition bias toward pro residues; that stretch reads DPPPTAAPGAP.

The protein belongs to the protein kinase superfamily. CAMK Ser/Thr protein kinase family. LKB1 subfamily. As to quaternary structure, interacts with strd-1. The cofactor is Mg(2+). It depends on Mn(2+) as a cofactor. As to expression, expressed in the gonads, oocytes and early embryos (at protein level).

It is found in the cytoplasm. It localises to the cell cortex. It catalyses the reaction L-seryl-[protein] + ATP = O-phospho-L-seryl-[protein] + ADP + H(+). The enzyme catalyses L-threonyl-[protein] + ATP = O-phospho-L-threonyl-[protein] + ADP + H(+). Required for cytoplasmic partitioning and asymmetric cell division in early embryogenesis. Controls the asymmetric cell division of the Q.p neuroblast lineage. Involved in mediating cell polarization via regulation of anillin family scaffold proteins. Phosphorylates and restricts the asymmetry effectors mex-5 and mex-6 to the anterior cytoplasm of the zygote and maintains these phosphorylations until fertilization. May phosphorylate par-1. Required for strd-1 localization to the cell cortex of early embryos and may be required for strd-1 protein stabilization. May regulate the integrity of the early embryonic cortex in a strd-1-dependent manner. Phosphorylates and regulates aak-2 in response to oxidative stress and during dauer development. May also play a role in motility, behavioral response, regulation of lifespan and dauer formation through this pathway. Required to establish germline stem cell (GSC) quiescence during dauer development. Acts downstream of unc-40 in dendrite outgrowth. May play a role in cell shedding during embryogenesis, probably by phosphorylating pig-1. The polypeptide is Serine/threonine-protein kinase par-4 (par-4) (Caenorhabditis elegans).